A 454-amino-acid chain; its full sequence is Alkaline extracellular protease (454 aa).

The N-terminal stretch at 1–15 (MKLATAFTILTAVLA) is a signal peptide. Positions 16–157 (APLAAPAPAP…EIPASSNAKR (142 aa)) are excised as a propeptide. Residues 68–146 (FIVVFDSSAT…TVEPDTIVSL (79 aa)) enclose the Inhibitor I9 domain. An N-linked (GlcNAc...) asparagine glycan is attached at Asn123. Positions 166 to 454 (QWGLSRISHK…NAVAYNGVGI (289 aa)) constitute a Peptidase S8 domain. Active-site charge relay system residues include Asp200, His231, and Ser397.

The protein belongs to the peptidase S8 family. In terms of processing, the pro-region is removed through cleavage by XPR6 after Lys156-Arg157, which yields mature active XPR2. Post-translationally, the 10 consecutive -X-Ala- or -X-Pro- dipeptides located over 100 amino acids upstream of the N-terminal of mature XPR2 are subject to dipeptidyl aminopeptidase (DPAPase)-processing. DPAPase activity is not necessary for XPR6 cleavage and for secretion of mature active XPR2. N-glycosylated. Glycosylation within the pro-region has no effect on secretion and maturation at 18 degrees Celsius, but is required for secretion at 28 degrees Celsius.

It localises to the secreted. It catalyses the reaction Hydrolysis of proteins with broad specificity for peptide bonds, and a preference for a large uncharged residue in P1. Hydrolyzes peptide amides.. Its activity is regulated as follows. The protease activity is completely inhibited by the serine inhibitor PMSF but is not affected by thiol group inhibitors and in the presence of dithiothreitol. In the presence of high concentrations of o-phenanthroline the protease activity is only partially inhibited. The pro-region plays an inhibitory role and may provide a mechanism for preventing premature activation in the secretory pathway. Major secreted protein that belongs to the subtilisin family serine proteases. The chain is Alkaline extracellular protease from Yarrowia lipolytica (strain CLIB 122 / E 150) (Yeast).